The sequence spans 843 residues: Protein P (843 aa).

The segment at 1-177 (MPLSYQHFRK…FCGSPYSWEQ (177 aa)) is terminal protein domain (TP). A spacer region spans residues 178-346 (ELQHGRLVFQ…YCLTHIVNLL (169 aa)). A polymerase/reverse transcriptase domain (RT) region spans residues 347–690 (EDWGPCTEHG…YLHLYPVARQ (344 aa)). The Reverse transcriptase domain occupies 357–600 (EHNIRIPRTP…YSLNFMGYVI (244 aa)). Mg(2+)-binding residues include Asp429, Asp551, and Asp552.

This sequence belongs to the hepadnaviridae P protein family.

The enzyme catalyses DNA(n) + a 2'-deoxyribonucleoside 5'-triphosphate = DNA(n+1) + diphosphate. The catalysed reaction is Endonucleolytic cleavage to 5'-phosphomonoester.. With respect to regulation, activated by host HSP70 and HSP40 in vitro to be able to bind the epsilon loop of the pgRNA. Because deletion of the RNase H region renders the protein partly chaperone-independent, the chaperones may be needed indirectly to relieve occlusion of the RNA-binding site by this domain. Inhibited by several reverse-transcriptase inhibitors: Lamivudine, Adefovir and Entecavir. In terms of biological role, multifunctional enzyme that converts the viral RNA genome into dsDNA in viral cytoplasmic capsids. This enzyme displays a DNA polymerase activity that can copy either DNA or RNA templates, and a ribonuclease H (RNase H) activity that cleaves the RNA strand of RNA-DNA heteroduplexes in a partially processive 3'- to 5'-endonucleasic mode. Neo-synthesized pregenomic RNA (pgRNA) are encapsidated together with the P protein, and reverse-transcribed inside the nucleocapsid. Initiation of reverse-transcription occurs first by binding the epsilon loop on the pgRNA genome, and is initiated by protein priming, thereby the 5'-end of (-)DNA is covalently linked to P protein. Partial (+)DNA is synthesized from the (-)DNA template and generates the relaxed circular DNA (RC-DNA) genome. After budding and infection, the RC-DNA migrates in the nucleus, and is converted into a plasmid-like covalently closed circular DNA (cccDNA). The activity of P protein does not seem to be necessary for cccDNA generation, and is presumably released from (+)DNA by host nuclear DNA repair machinery. The chain is Protein P from Hepatitis B virus genotype C subtype adr (isolate Japan/Nishioka/1983) (HBV-C).